The sequence spans 952 residues: Isoleucine--tRNA ligase (952 aa).

A 'HIGH' region motif is present at residues 58 to 68; sequence PYANGDIHIGH. Residue glutamate 576 participates in L-isoleucyl-5'-AMP binding. A 'KMSKS' region motif is present at residues 617 to 621; the sequence is KMSKS. Lysine 620 is a binding site for ATP. Zn(2+)-binding residues include cysteine 915, cysteine 918, cysteine 935, and cysteine 938.

The protein belongs to the class-I aminoacyl-tRNA synthetase family. IleS type 1 subfamily. Monomer. Requires Zn(2+) as cofactor.

The protein resides in the cytoplasm. The catalysed reaction is tRNA(Ile) + L-isoleucine + ATP = L-isoleucyl-tRNA(Ile) + AMP + diphosphate. Functionally, catalyzes the attachment of isoleucine to tRNA(Ile). As IleRS can inadvertently accommodate and process structurally similar amino acids such as valine, to avoid such errors it has two additional distinct tRNA(Ile)-dependent editing activities. One activity is designated as 'pretransfer' editing and involves the hydrolysis of activated Val-AMP. The other activity is designated 'posttransfer' editing and involves deacylation of mischarged Val-tRNA(Ile). In Aliivibrio fischeri (strain ATCC 700601 / ES114) (Vibrio fischeri), this protein is Isoleucine--tRNA ligase.